A 189-amino-acid polypeptide reads, in one-letter code: Parkinson disease protein 7 homolog (189 aa).

A2 carries the post-translational modification N-acetylalanine; in Protein/nucleic acid deglycase DJ-1, N-terminally processed. 2 S-palmitoyl cysteine lipidation sites follow: C46 and C53. Y67 is subject to Phosphotyrosine. Catalysis depends on C106, which acts as the Nucleophile. A Cysteine sulfinic acid (-SO2H); alternate modification is found at C106. C106 is lipidated: S-palmitoyl cysteine; alternate. H126 is an active-site residue. Residue K130 forms a Glycyl lysine isopeptide (Lys-Gly) (interchain with G-Cter in SUMO) linkage. Residue K148 is modified to N6-acetyllysine. Residue K182 is modified to N6-succinyllysine.

Belongs to the peptidase C56 family. In terms of assembly, homodimer. Binds EFCAB6/DJBP and PIAS2. Part of a ternary complex containing PARK7, EFCAB6/DJBP and AR. Interacts (via N-terminus) with OTUD7B. Interacts with BBS1, HIPK1, CLCF1 and MTERF. Forms a complex with PINK1 and PRKN. Interacts (via C-terminus) with NCF1; the interaction is enhanced by LPS and modulates NCF1 phosphorylation and membrane translocation. Interacts with NENF. Requires Deglycase activity does not require glutathione as a cofactor, however, glycated glutathione constitutes a PARK7 substrate. as cofactor. Post-translationally, sumoylated on Lys-130 by PIAS2 or PIAS4; which is essential for cell-growth promoting activity and transforming activity. Undergoes cleavage of a C-terminal peptide and subsequent activation of protease activity in response to oxidative stress. Detected in liver, heart, spleen and testis (at protein level). Detected in liver, heart, spleen, kidney, epididymidis, vas deferens, sperm cells and testis.

The protein resides in the cell membrane. It is found in the cytoplasm. The protein localises to the nucleus. Its subcellular location is the membrane raft. It localises to the mitochondrion. The protein resides in the endoplasmic reticulum. It carries out the reaction N(omega)-(1-hydroxy-2-oxopropyl)-L-arginyl-[protein] + H2O = lactate + L-arginyl-[protein] + H(+). The enzyme catalyses N(6)-(1-hydroxy-2-oxopropyl)-L-lysyl-[protein] + H2O = lactate + L-lysyl-[protein] + H(+). The catalysed reaction is S-(1-hydroxy-2-oxopropyl)-L-cysteinyl-[protein] + H2O = lactate + L-cysteinyl-[protein] + H(+). It catalyses the reaction N(omega)-(1-hydroxy-2-oxoethyl)-L-arginyl-[protein] + H2O = L-arginyl-[protein] + glycolate + H(+). It carries out the reaction N(6)-(1-hydroxy-2-oxoethyl)-L-lysyl-[protein] + H2O = glycolate + L-lysyl-[protein] + H(+). The enzyme catalyses S-(1-hydroxy-2-oxoethyl)-L-cysteinyl-[protein] + H2O = glycolate + L-cysteinyl-[protein] + H(+). The catalysed reaction is N(2)-(1-hydroxy-2-oxopropyl)-dGTP + H2O = lactate + dGTP + H(+). It catalyses the reaction N(2)-(1-hydroxy-2-oxopropyl)-GTP + H2O = lactate + GTP + H(+). It carries out the reaction N(2)-(1-hydroxy-2-oxopropyl)-GDP + H2O = lactate + GDP + H(+). The enzyme catalyses N(2)-(1-hydroxy-2-oxopropyl)-GMP + H2O = lactate + GMP + H(+). The catalysed reaction is N(2)-(1-hydroxy-2-oxoethyl)-dGTP + H2O = dGTP + glycolate + H(+). It catalyses the reaction N(2)-(1-hydroxy-2-oxoethyl)-GTP + H2O = glycolate + GTP + H(+). It carries out the reaction N(2)-(1-hydroxy-2-oxoethyl)-GDP + H2O = glycolate + GDP + H(+). The enzyme catalyses N(2)-(1-hydroxy-2-oxoethyl)-GMP + H2O = glycolate + GMP + H(+). The catalysed reaction is an N(2)-(1-hydroxy-2-oxopropyl)-guanosine in RNA + H2O = a guanosine in RNA + lactate + H(+). It catalyses the reaction an N(2)-(1-hydroxy-2-oxopropyl)-2'-deoxyguanosine in DNA + H2O = a 2'-deoxyguanosine in DNA + lactate + H(+). It carries out the reaction an N(2)-(1-hydroxy-2-oxoethyl)-guanosine in RNA + H2O = a guanosine in RNA + glycolate + H(+). The enzyme catalyses an N(2)-(1-hydroxy-2-oxoethyl)-2'-deoxyguanosine in DNA + H2O = a 2'-deoxyguanosine in DNA + glycolate + H(+). Functionally, multifunctional protein with controversial molecular function which plays an important role in cell protection against oxidative stress and cell death acting as oxidative stress sensor and redox-sensitive chaperone and protease. It is involved in neuroprotective mechanisms like the stabilization of NFE2L2 and PINK1 proteins, male fertility as a positive regulator of androgen signaling pathway as well as cell growth and transformation through, for instance, the modulation of NF-kappa-B signaling pathway. Has been described as a protein and nucleotide deglycase that catalyzes the deglycation of the Maillard adducts formed between amino groups of proteins or nucleotides and reactive carbonyl groups of glyoxals. But this function is rebuted by other works. As a protein deglycase, repairs methylglyoxal- and glyoxal-glycated proteins, and releases repaired proteins and lactate or glycolate, respectively. Deglycates cysteine, arginine and lysine residues in proteins, and thus reactivates these proteins by reversing glycation by glyoxals. Acts on early glycation intermediates (hemithioacetals and aminocarbinols), preventing the formation of advanced glycation endproducts (AGE) that cause irreversible damage. Also functions as a nucleotide deglycase able to repair glycated guanine in the free nucleotide pool (GTP, GDP, GMP, dGTP) and in DNA and RNA. Is thus involved in a major nucleotide repair system named guanine glycation repair (GG repair), dedicated to reversing methylglyoxal and glyoxal damage via nucleotide sanitization and direct nucleic acid repair. Protects histones from adduction by methylglyoxal, controls the levels of methylglyoxal-derived argininine modifications on chromatin. Able to remove the glycations and restore histone 3, histone glycation disrupts both local and global chromatin architecture by altering histone-DNA interactions as well as histone acetylation and ubiquitination levels. Displays a very low glyoxalase activity that may reflect its deglycase activity. Eliminates hydrogen peroxide and protects cells against hydrogen peroxide-induced cell death. Required for correct mitochondrial morphology and function as well as for autophagy of dysfunctional mitochondria. Plays a role in regulating expression or stability of the mitochondrial uncoupling proteins SLC25A14 and SLC25A27 in dopaminergic neurons of the substantia nigra pars compacta and attenuates the oxidative stress induced by calcium entry into the neurons via L-type channels during pacemaking. Regulates astrocyte inflammatory responses, may modulate lipid rafts-dependent endocytosis in astrocytes and neuronal cells. In pancreatic islets, involved in the maintenance of mitochondrial reactive oxygen species (ROS) levels and glucose homeostasis in an age- and diet dependent manner. Protects pancreatic beta cells from cell death induced by inflammatory and cytotoxic setting. Binds to a number of mRNAs containing multiple copies of GG or CC motifs and partially inhibits their translation but dissociates following oxidative stress. Metal-binding protein able to bind copper as well as toxic mercury ions, enhances the cell protection mechanism against induced metal toxicity. In macrophages, interacts with the NADPH oxidase subunit NCF1 to direct NADPH oxidase-dependent ROS production, and protects against sepsis. In Mesocricetus auratus (Golden hamster), this protein is Parkinson disease protein 7 homolog (PARK7).